Consider the following 232-residue polypeptide: NAD(P)H-hydrate epimerase (232 aa).

The region spanning 9 to 219 (AISVDEELFN…KLQDKYAMEL (211 aa)) is the YjeF N-terminal domain. 62 to 66 (NNGGD) lines the (6S)-NADPHX pocket. Residues Asn-63 and Asp-127 each coordinate K(+). (6S)-NADPHX is bound by residues 131–137 (GFSFKPP) and Asp-160. A K(+)-binding site is contributed by Ser-163.

It belongs to the NnrE/AIBP family. It depends on K(+) as a cofactor.

It carries out the reaction (6R)-NADHX = (6S)-NADHX. It catalyses the reaction (6R)-NADPHX = (6S)-NADPHX. Functionally, catalyzes the epimerization of the S- and R-forms of NAD(P)HX, a damaged form of NAD(P)H that is a result of enzymatic or heat-dependent hydration. This is a prerequisite for the S-specific NAD(P)H-hydrate dehydratase to allow the repair of both epimers of NAD(P)HX. This Aedes aegypti (Yellowfever mosquito) protein is NAD(P)H-hydrate epimerase.